An 873-amino-acid chain; its full sequence is Envelope glycoprotein B (873 aa).

The N-terminal stretch at 1–21 (MASLKMLICVCVAILIPSTLS) is a signal peptide. Residues 22–740 (QDSHGIAGII…SGIASFLSNP (719 aa)) are Virion surface-facing. 5 disulfide bridges follow: Cys67–Cys525, Cys84–Cys481, Cys157–Cys219, Cys311–Cys359, and Cys548–Cys598. 2 N-linked (GlcNAc...) asparagine; by host glycosylation sites follow: Asn92 and Asn111. Positions 124-130 (TWALFSR) are involved in fusion and/or binding to host membrane. An N-linked (GlcNAc...) asparagine; by host glycan is attached at Asn201. Residues 206 to 213 (HQTLGYRT) are involved in fusion and/or binding to host membrane. N-linked (GlcNAc...) asparagine; by host glycosylation is found at Asn252 and Asn350. Residues 418 to 447 (QNHLPRGRERRQAAGRRTASLQSGPQGDRI) form a disordered region. Asn569, Asn625, and Asn639 each carry an N-linked (GlcNAc...) asparagine; by host glycan. 2 hydrophobic membrane proximal region regions span residues 684 to 738 (IDTV…SFLS) and 715 to 734 (LGTV…SGIA). A helical transmembrane segment spans residues 741-761 (FAALGIGIAVVVSIILGLLAF). Over 762-873 (KYVMNLKSNP…PSWAEESEDE (112 aa)) the chain is Intravirion. The disordered stretch occupies residues 781–807 (PPAGTPPRPSRRYYKDEEEVEEDSDED). A compositionally biased stretch (acidic residues) spans 796-807 (DEEEVEEDSDED). Positions 858 to 861 (YPLL) match the Internalization motif motif.

This sequence belongs to the herpesviridae glycoprotein B family. In terms of assembly, homotrimer; disulfide-linked. Binds to heparan sulfate proteoglycans. Interacts with gH/gL heterodimer. Post-translationally, a proteolytic cleavage by host furin generates two subunits that remain linked by disulfide bonds.

It is found in the virion membrane. It localises to the host cell membrane. Its subcellular location is the host endosome membrane. The protein localises to the host Golgi apparatus membrane. In terms of biological role, envelope glycoprotein that forms spikes at the surface of virion envelope. Essential for the initial attachment to heparan sulfate moieties of the host cell surface proteoglycans. Involved in fusion of viral and cellular membranes leading to virus entry into the host cell. Following initial binding to its host receptors, membrane fusion is mediated by the fusion machinery composed at least of gB and the heterodimer gH/gL. May be involved in the fusion between the virion envelope and the outer nuclear membrane during virion egress. In Infectious laryngotracheitis virus (strain 632) (ILTV), this protein is Envelope glycoprotein B.